The following is an 822-amino-acid chain: General transcription factor 3C polypeptide 4 (822 aa).

M1 carries the N-acetylmethionine modification. Positions M1–P41 are disordered. S19 bears the Phosphoserine mark. K225 participates in a covalent cross-link: Glycyl lysine isopeptide (Lys-Gly) (interchain with G-Cter in SUMO2). Phosphoserine is present on residues S604 and S611. The tract at residues L608–E663 is disordered. K629 is covalently cross-linked (Glycyl lysine isopeptide (Lys-Gly) (interchain with G-Cter in SUMO2)). S652 carries the phosphoserine modification.

Belongs to the TFIIIC subunit 4 family. Part of the TFIIIC subcomplex TFIIIC2, consisting of six subunits, GTF3C1, GTF3C2, GTF3C3, GTF3C4, GTF3C5 and GTF3C6. Interacts with BRF1, GTF3C1, GTF3C2, GTF3C5, GTF3C6, POLR3C and POLR3F.

It is found in the nucleus. The catalysed reaction is L-lysyl-[protein] + acetyl-CoA = N(6)-acetyl-L-lysyl-[protein] + CoA + H(+). In terms of biological role, essential for RNA polymerase III to make a number of small nuclear and cytoplasmic RNAs, including 5S RNA, tRNA, and adenovirus-associated (VA) RNA of both cellular and viral origin. Has histone acetyltransferase activity (HAT) with unique specificity for free and nucleosomal H3. May cooperate with GTF3C5 in facilitating the recruitment of TFIIIB and RNA polymerase through direct interactions with BRF1, POLR3C and POLR3F. May be localized close to the A box. The protein is General transcription factor 3C polypeptide 4 (GTF3C4) of Homo sapiens (Human).